Reading from the N-terminus, the 402-residue chain is Caspase-1 (402 aa).

The CARD domain occupies 1-91 (MADKVLRAKR…YLAEILELQS (91 aa)). A propeptide spanning residues 1–118 (MADKVLRAKR…PFSSETKEKL (118 aa)) is cleaved from the precursor. Residues His236 and Cys284 contribute to the active site. The propeptide occupies 297-314 (SVGNSEEGFLTDAIFEDD). A Phosphoserine modification is found at Ser301.

This sequence belongs to the peptidase C14A family. Heterotetramer that consists of two anti-parallel arranged heterodimers, each one formed by a 20 kDa (Caspase-1 subunit p20) and a 10 kDa (Caspase-1 subunit p10) subunit. May be a component of the inflammasome, a protein complex which also includes PYCARD, CARD8 and NLRP2 and whose function would be the activation of pro-inflammatory caspases. Component of the AIM2 PANoptosome complex, a multiprotein complex that drives inflammatory cell death (PANoptosis). Both the p10 and p20 subunits interact with MEFV. Interacts with CARD17P/INCA and CARD18. Interacts with SERPINB1; this interaction regulates CASP1 activity. In terms of assembly, heterotetramer that consists of two anti-parallel arranged heterodimers, each one formed by a 20 kDa (Caspase-1 subunit p20) and a 10 kDa (Caspase-1 subunit p10) subunit. Post-translationally, the two subunits are derived from the precursor sequence by an autocatalytic mechanism. Ubiquitinated via 'Lys-11'-linked polyubiquitination. Deubiquitinated by USP8.

It is found in the cytoplasm. It localises to the cell membrane. It carries out the reaction Strict requirement for an Asp residue at position P1 and has a preferred cleavage sequence of Tyr-Val-Ala-Asp-|-.. Its function is as follows. Thiol protease involved in a variety of inflammatory processes by proteolytically cleaving other proteins, such as the precursors of the inflammatory cytokines interleukin-1 beta (IL1B) and interleukin 18 (IL18) as well as the pyroptosis inducer Gasdermin-D (GSDMD), into active mature peptides. Plays a key role in cell immunity as an inflammatory response initiator: once activated through formation of an inflammasome complex, it initiates a pro-inflammatory response through the cleavage of the two inflammatory cytokines IL1B and IL18, releasing the mature cytokines which are involved in a variety of inflammatory processes. Cleaves a tetrapeptide after an Asp residue at position P1. Also initiates pyroptosis, a programmed lytic cell death pathway, through cleavage of GSDMD. In contrast to cleavage of interleukin IL1B, recognition and cleavage of GSDMD is not strictly dependent on the consensus cleavage site but depends on an exosite interface on CASP1 that recognizes and binds the Gasdermin-D, C-terminal (GSDMD-CT) part. Cleaves and activates CASP7 in response to bacterial infection, promoting plasma membrane repair. Upon inflammasome activation, during DNA virus infection but not RNA virus challenge, controls antiviral immunity through the cleavage of CGAS, rendering it inactive. In apoptotic cells, cleaves SPHK2 which is released from cells and remains enzymatically active extracellularly. In Rattus norvegicus (Rat), this protein is Caspase-1 (Casp1).